Consider the following 996-residue polypeptide: NACHT, LRR and PYD domains-containing protein 9 (996 aa).

One can recognise a Pyrin domain in the interval methionine 1–glutamine 94. In terms of domain architecture, NACHT spans proline 150–proline 469. Glycine 156–threonine 163 is an ATP binding site. LRR repeat units lie at residues lysine 748–glutamate 769, alanine 777–glutamine 798, serine 805–cysteine 825, asparagine 834–threonine 855, lysine 862–lysine 883, and lysine 891–leucine 914.

Belongs to the NLRP family. In terms of assembly, sensor component of NLRP9 inflammasomes. Inflammasomes are supramolecular complexes that assemble in the cytosol in response to pathogens, such as rotavirus, and play critical roles in innate immunity and inflammation. The core of NLRP9 inflammasomes consists of a signal sensor component (NLRP9), an adapter (ASC/PYCARD), which recruits an effector pro-inflammatory caspase (CASP1). Within the complex, NLRP9 and PYCARD interact via their respective DAPIN/pyrin domains. This interaction initiates speck formation (nucleation) which greatly enhances further addition of soluble PYCARD molecules to the speck in a prion-like polymerization process. Clustered PYCARD nucleates the formation of CASP1 filaments through the interaction of their respective CARD domains, acting as a platform for CASP1 polymerization. CASP1 filament formation increases local enzyme concentration, resulting in trans-autocleavage and activation. Active CASP1 then processes IL1B and IL18 precursors, leading to the release of mature cytokines in the extracellular milieu and inflammatory response. Interacts with DHX9 upon rotavirus infection; this interaction may trigger inflammasome activation and inflammatory response. As to expression, detected exclusively in testis and ovary, and at high level in the oocyte from antral follicles.

It localises to the cytoplasm. It is found in the inflammasome. Its function is as follows. As the sensor component of the NLRP9 inflammasome, plays a crucial role in innate immunity and inflammation. In response to pathogens, including rotavirus, initiates the formation of the inflammasome polymeric complex, made of NLRP9, PYCARD and CASP1. Recruitment of proCASP1 to the inflammasome promotes its activation and CASP1-catalyzed IL1B and IL18 maturation and release in the extracellular milieu. The active cytokines stimulate inflammatory responses. Inflammasomes can also induce pyroptosis, an inflammatory form of programmed cell death. NLRP9 inflammasome activation may be initiated by DHX9 interaction with viral double-stranded RNA (dsRNA), preferentially to short dsRNA segments. In Bos taurus (Bovine), this protein is NACHT, LRR and PYD domains-containing protein 9 (NLRP9).